Reading from the N-terminus, the 175-residue chain is MMTYIAFILSTILVVSFVGFSSKPSPIYGGLGLIVSGGVGCGIVLNYGGSFLGLMVFLIYLGGMLVVFGYTTAMAMEEYPEVWVSNKTVLSLFVLGFMAELLFAGYCISDEKLEIVLNFNGQGDWVIYDTGDSGFFSEEAMGIAALYSYGTWLVIVTGWSLVIGVLVVMEITRGN.

5 helical membrane passes run 1–21 (MMTY…VGFS), 25–45 (SPIY…GIVL), 48–68 (GGSF…LVVF), 88–108 (TVLS…GYCI), and 149–169 (YGTW…LVVM).

It belongs to the complex I subunit 6 family. In terms of assembly, core subunit of respiratory chain NADH dehydrogenase (Complex I) which is composed of 45 different subunits.

The protein localises to the mitochondrion inner membrane. It carries out the reaction a ubiquinone + NADH + 5 H(+)(in) = a ubiquinol + NAD(+) + 4 H(+)(out). In terms of biological role, core subunit of the mitochondrial membrane respiratory chain NADH dehydrogenase (Complex I) which catalyzes electron transfer from NADH through the respiratory chain, using ubiquinone as an electron acceptor. Essential for the catalytic activity and assembly of complex I. This chain is NADH-ubiquinone oxidoreductase chain 6 (MT-ND6), found in Urotrichus talpoides (Japanese shrew mole).